We begin with the raw amino-acid sequence, 328 residues long: UPF0252 protein PF0978 (328 aa).

The chain crosses the membrane as a helical span at residues 3-23 (VPLLILLFLVLTSGCIAPSTP).

The protein belongs to the UPF0252 family.

It localises to the membrane. The polypeptide is UPF0252 protein PF0978 (Pyrococcus furiosus (strain ATCC 43587 / DSM 3638 / JCM 8422 / Vc1)).